Here is a 142-residue protein sequence, read N- to C-terminus: Mediator of RNA polymerase II transcription subunit 21 (142 aa).

The stretch at 87 to 131 forms a coiled coil; that stretch reads AEEQLSRIDSLQKKLIQVEGEKIEAIKRKESLTKDIEELINEFTE.

It belongs to the Mediator complex subunit 21 family. As to quaternary structure, component of the Mediator complex.

The protein resides in the nucleus. Its function is as follows. Component of the Mediator complex, a coactivator involved in the regulated transcription of nearly all RNA polymerase II-dependent genes. Mediator functions as a bridge to convey information from gene-specific regulatory proteins to the basal RNA polymerase II transcription machinery. Mediator is recruited to promoters by direct interactions with regulatory proteins and serves as a scaffold for the assembly of a functional preinitiation complex with RNA polymerase II and the general transcription factors. The protein is Mediator of RNA polymerase II transcription subunit 21 (SRB7) of Eremothecium gossypii (strain ATCC 10895 / CBS 109.51 / FGSC 9923 / NRRL Y-1056) (Yeast).